A 265-amino-acid polypeptide reads, in one-letter code: Ubiquinone biosynthesis protein COQ4 homolog, mitochondrial (265 aa).

Zn(2+) is bound by residues His-162, Asp-163, His-166, and Glu-178.

Belongs to the COQ4 family. In terms of assembly, component of a multi-subunit COQ enzyme complex. Requires Zn(2+) as cofactor.

It is found in the mitochondrion inner membrane. It catalyses the reaction a 4-hydroxy-3-methoxy-5-(all-trans-polyprenyl)benzoate + H(+) = a 2-methoxy-6-(all-trans-polyprenyl)phenol + CO2. It functions in the pathway cofactor biosynthesis; ubiquinone biosynthesis. Lyase that catalyzes the C1-decarboxylation of 4-hydroxy-3-methoxy-5-(all-trans-polyprenyl)benzoic acid into 2-methoxy-6-(all-trans-polyprenyl)phenol during ubiquinone biosynthesis. The chain is Ubiquinone biosynthesis protein COQ4 homolog, mitochondrial from Drosophila willistoni (Fruit fly).